The following is an 810-amino-acid chain: E3 ubiquitin-protein ligase RNF10 (810 aa).

Over residues 1–31 the composition is skewed to low complexity; the sequence is MPQSSPSAAATASDMDKNSGSSSSSASSGSS. The interval 1 to 119 is disordered; that stretch reads MPQSSPSAAA…SFNGGRRDEV (119 aa). Ser-5 carries the phosphoserine modification. The segment covering 76–92 has biased composition (polar residues); that stretch reads NFINQSRRSNSQKSKTF. The interaction with MEOX2 stretch occupies residues 101–185; that stretch reads GGSSKLFSSS…FNKELFLQAN (85 aa). A compositionally biased stretch (low complexity) spans 104–113; that stretch reads SKLFSSSFNG. Ser-110 and Ser-128 each carry phosphoserine. The RING-type zinc-finger motif lies at 225-267; it reads CPICLYPPTAAKITRCGHIFCWACILHYLSLSEKTWSKCPICY. Disordered stretches follow at residues 598–623, 652–674, 722–759, and 775–810; these read KRKRQRQKKAREERRRERRIEMEENK, DSALGSTSTEGRGALSLSPLSRS, ADVWPKTAPKKDENTLGPPAPVDSDGESDNSDRVPVPS, and LDTPVTSDPLSEEKGGKKRKKQKQKLLFSTSVVHTK. The segment covering 607–623 has biased composition (basic and acidic residues); sequence AREERRRERRIEMEENK. Residues 652 to 661 are compositionally biased toward polar residues; sequence DSALGSTSTE. A compositionally biased stretch (low complexity) spans 662-674; it reads GRGALSLSPLSRS. Positions 722-735 are enriched in basic and acidic residues; it reads ADVWPKTAPKKDEN. A compositionally biased stretch (polar residues) spans 801–810; that stretch reads LFSTSVVHTK.

This sequence belongs to the RNF10 family. Interacts with MEOX2.

It localises to the cytoplasm. The protein localises to the nucleus. It catalyses the reaction S-ubiquitinyl-[E2 ubiquitin-conjugating enzyme]-L-cysteine + [acceptor protein]-L-lysine = [E2 ubiquitin-conjugating enzyme]-L-cysteine + N(6)-ubiquitinyl-[acceptor protein]-L-lysine.. The protein operates within protein modification; protein ubiquitination. Its function is as follows. E3 ubiquitin-protein ligase that catalyzes monoubiquitination of 40S ribosomal proteins RPS2/us5 and RPS3/us3 in response to ribosome stalling. Part of a ribosome quality control that takes place when ribosomes have stalled during translation initiation (iRQC): RNF10 acts by mediating monoubiquitination of RPS2/us5 and RPS3/us3, promoting their degradation by the proteasome. Also promotes ubiquitination of 40S ribosomal proteins in response to ribosome stalling during translation elongation. The action of RNF10 in iRQC is counteracted by USP10. May also act as a transcriptional factor involved in the regulation of MAG (Myelin-associated glycoprotein) expression. Acts as a regulator of Schwann cell differentiation and myelination. This is E3 ubiquitin-protein ligase RNF10 (RNF10) from Bos taurus (Bovine).